The primary structure comprises 84 residues: ATP synthase subunit c (84 aa).

2 consecutive transmembrane segments (helical) span residues 9-29 (IIGA…GFAI) and 54-74 (IVAG…LLFI).

Belongs to the ATPase C chain family. F-type ATPases have 2 components, F(1) - the catalytic core - and F(0) - the membrane proton channel. F(1) has five subunits: alpha(3), beta(3), gamma(1), delta(1), epsilon(1). F(0) has three main subunits: a(1), b(2) and c(10-14). The alpha and beta chains form an alternating ring which encloses part of the gamma chain. F(1) is attached to F(0) by a central stalk formed by the gamma and epsilon chains, while a peripheral stalk is formed by the delta and b chains.

Its subcellular location is the cell inner membrane. Its function is as follows. F(1)F(0) ATP synthase produces ATP from ADP in the presence of a proton or sodium gradient. F-type ATPases consist of two structural domains, F(1) containing the extramembraneous catalytic core and F(0) containing the membrane proton channel, linked together by a central stalk and a peripheral stalk. During catalysis, ATP synthesis in the catalytic domain of F(1) is coupled via a rotary mechanism of the central stalk subunits to proton translocation. In terms of biological role, key component of the F(0) channel; it plays a direct role in translocation across the membrane. A homomeric c-ring of between 10-14 subunits forms the central stalk rotor element with the F(1) delta and epsilon subunits. This Haemophilus ducreyi (strain 35000HP / ATCC 700724) protein is ATP synthase subunit c.